The primary structure comprises 322 residues: uncharacterized protein (322 aa).

Positions 1–63 (MFKIRKRSVP…DEASSSDSHY (63 aa)) are disordered. Positions 34–49 (FVDDHGKPIAEYRDFP) are enriched in basic and acidic residues. A C3H1-type zinc finger spans residues 245 to 274 (WKVDRICTYYINRPDKCTRGDNCRFKHDDV). The segment at 278–322 (HRQKEIQSSRNQSWHHRTSSHKYSSENSDHRGYRRHRSRSPHARQ) is disordered. Positions 309–322 (GYRRHRSRSPHARQ) are enriched in basic residues.

This is an uncharacterized protein from Caenorhabditis elegans.